Consider the following 393-residue polypeptide: Alpha-1,2 mannosyltransferase KTR1 (393 aa).

The Cytoplasmic segment spans residues 1-16 (MAKIMIPASKQPVYKK). The helical; Signal-anchor for type II membrane protein transmembrane segment at 17-34 (LGLLLVAVFTVYVFFHGA) threads the bilayer. The tract at residues 35–68 (QYARGSAPSPKYSTVLSSGSGYKYSKVELPKYTG) is stem region. The Lumenal segment spans residues 35-393 (QYARGSAPSP…KPAGWQNHIG (359 aa)). The tract at residues 69-393 (PREKATFVTL…KPAGWQNHIG (325 aa)) is catalytic. N120 carries N-linked (GlcNAc...) asparagine glycosylation. E280 (nucleophile) is an active-site residue.

Belongs to the glycosyltransferase 15 family. Requires Mn(2+) as cofactor. In terms of processing, N-glycosylated.

It localises to the golgi apparatus membrane. The protein operates within protein modification; protein glycosylation. Its function is as follows. Mannosyltransferase that transfers a mannose residue from GDP-mannose to a range of acceptors in vitro, forming an alpha-(1-&gt;2)-D-mannosyl-D-mannose linkage. This is Alpha-1,2 mannosyltransferase KTR1 (KTR1) from Saccharomyces cerevisiae (strain ATCC 204508 / S288c) (Baker's yeast).